Reading from the N-terminus, the 378-residue chain is Ribosomal RNA large subunit methyltransferase G (378 aa).

It belongs to the methyltransferase superfamily. RlmG family.

Its subcellular location is the cytoplasm. It catalyses the reaction guanosine(1835) in 23S rRNA + S-adenosyl-L-methionine = N(2)-methylguanosine(1835) in 23S rRNA + S-adenosyl-L-homocysteine + H(+). In terms of biological role, specifically methylates the guanine in position 1835 (m2G1835) of 23S rRNA. This chain is Ribosomal RNA large subunit methyltransferase G, found in Salmonella newport (strain SL254).